The chain runs to 1551 residues: Pentafunctional AROM polypeptide 2 (1551 aa).

Residues 1–379 (MSIEKVSILG…YESKAHQIFK (379 aa)) form a 3-dehydroquinate synthase region. NAD(+)-binding positions include 42 to 44 (DTN), 80 to 83 (ENHK), 111 to 113 (GGV), and aspartate 116. A 7-phospho-2-dehydro-3-deoxy-D-arabino-heptonate-binding site is contributed by arginine 127. 136–137 (TT) contacts NAD(+). 7-phospho-2-dehydro-3-deoxy-D-arabino-heptonate is bound by residues aspartate 143 and lysine 149. Lysine 158 contacts NAD(+). Residue asparagine 159 coordinates 7-phospho-2-dehydro-3-deoxy-D-arabino-heptonate. NAD(+)-binding positions include 176–179 (FLQT) and asparagine 187. Zn(2+) is bound at residue glutamate 191. Residues 191–194 (EVVK) and lysine 243 contribute to the 7-phospho-2-dehydro-3-deoxy-D-arabino-heptonate site. Glutamate 253 acts as the Proton acceptor; for 3-dehydroquinate synthase activity in catalysis. Residues 257–261 (RNLLN) and histidine 264 contribute to the 7-phospho-2-dehydro-3-deoxy-D-arabino-heptonate site. A Zn(2+)-binding site is contributed by histidine 264. Catalysis depends on histidine 268, which acts as the Proton acceptor; for 3-dehydroquinate synthase activity. Residues histidine 280 and lysine 351 each coordinate 7-phospho-2-dehydro-3-deoxy-D-arabino-heptonate. Histidine 280 provides a ligand contact to Zn(2+). The segment at 392-835 (VHPFANRHPE…WDVLHSKFNA (444 aa)) is EPSP synthase. A shikimate kinase region spans residues 854–1044 (DRSIVIIGMR…LPATRSTFVT (191 aa)). 861–868 (GMRAAGKT) provides a ligand contact to ATP. Positions 1045 to 1258 (LTYPDLRKVP…IGVGQLSLKE (214 aa)) are 3-dehydroquinase. Histidine 1162 serves as the catalytic Proton acceptor; for 3-dehydroquinate dehydratase activity. Lysine 1191 acts as the Schiff-base intermediate with substrate; for 3-dehydroquinate dehydratase activity in catalysis. Residues 1271–1551 (EKEFWVVGFP…KVIHSAVLNE (281 aa)) form a shikimate dehydrogenase region.

The protein in the N-terminal section; belongs to the sugar phosphate cyclases superfamily. Dehydroquinate synthase family. In the 2nd section; belongs to the EPSP synthase family. It in the 3rd section; belongs to the shikimate kinase family. This sequence in the 4th section; belongs to the type-I 3-dehydroquinase family. The protein in the C-terminal section; belongs to the shikimate dehydrogenase family. In terms of assembly, homodimer. Zn(2+) serves as cofactor.

Its subcellular location is the cytoplasm. It catalyses the reaction 7-phospho-2-dehydro-3-deoxy-D-arabino-heptonate = 3-dehydroquinate + phosphate. It carries out the reaction 3-dehydroquinate = 3-dehydroshikimate + H2O. The enzyme catalyses shikimate + NADP(+) = 3-dehydroshikimate + NADPH + H(+). The catalysed reaction is shikimate + ATP = 3-phosphoshikimate + ADP + H(+). It catalyses the reaction 3-phosphoshikimate + phosphoenolpyruvate = 5-O-(1-carboxyvinyl)-3-phosphoshikimate + phosphate. The protein operates within metabolic intermediate biosynthesis; chorismate biosynthesis; chorismate from D-erythrose 4-phosphate and phosphoenolpyruvate: step 2/7. It participates in metabolic intermediate biosynthesis; chorismate biosynthesis; chorismate from D-erythrose 4-phosphate and phosphoenolpyruvate: step 3/7. Its pathway is metabolic intermediate biosynthesis; chorismate biosynthesis; chorismate from D-erythrose 4-phosphate and phosphoenolpyruvate: step 4/7. It functions in the pathway metabolic intermediate biosynthesis; chorismate biosynthesis; chorismate from D-erythrose 4-phosphate and phosphoenolpyruvate: step 5/7. The protein operates within metabolic intermediate biosynthesis; chorismate biosynthesis; chorismate from D-erythrose 4-phosphate and phosphoenolpyruvate: step 6/7. Its function is as follows. The AROM polypeptide catalyzes 5 consecutive enzymatic reactions in prechorismate polyaromatic amino acid biosynthesis. In Lodderomyces elongisporus (strain ATCC 11503 / CBS 2605 / JCM 1781 / NBRC 1676 / NRRL YB-4239) (Yeast), this protein is Pentafunctional AROM polypeptide 2.